The sequence spans 556 residues: Glucose-6-phosphate isomerase (556 aa).

Residue Glu-360 is the Proton donor of the active site. Catalysis depends on residues His-391 and Lys-519.

This sequence belongs to the GPI family.

The protein resides in the cytoplasm. It carries out the reaction alpha-D-glucose 6-phosphate = beta-D-fructose 6-phosphate. It participates in carbohydrate biosynthesis; gluconeogenesis. Its pathway is carbohydrate degradation; glycolysis; D-glyceraldehyde 3-phosphate and glycerone phosphate from D-glucose: step 2/4. Functionally, catalyzes the reversible isomerization of glucose-6-phosphate to fructose-6-phosphate. The protein is Glucose-6-phosphate isomerase of Acinetobacter baumannii (strain SDF).